Consider the following 142-residue polypeptide: Mitochondrial import receptor subunit TOM22 homolog (142 aa).

The span at 1 to 11 shows a compositional bias: low complexity; it reads MAAAVAAAGAG. Residues 1 to 40 form a disordered region; that stretch reads MAAAVAAAGAGEPLSPEELVPKAEAEKAEEDLEEDDDDEL. The residue at position 2 (Ala-2) is an N-acetylalanine. At 2–82 the chain is on the cytoplasmic side; that stretch reads AAAVAAAGAG…VAQKMYRFSR (81 aa). Ser-15 carries the phosphoserine modification. Residues 27-40 show a composition bias toward acidic residues; it reads KAEEDLEEDDDDEL. The interval 41–50 is import sequence; necessary for mitochondrion outer membrane localization and integration in the TOM complex; it reads DETLSERLWG. Thr-43 bears the Phosphothreonine mark. Residue Ser-45 is modified to Phosphoserine. A helical transmembrane segment spans residues 83–103; it reads AALWIGTTSFMILVLPVVFET. Positions 83–103 are TMD; necessary for mitochondrion outer membrane localization and integration in the TOM complex; it reads AALWIGTTSFMILVLPVVFET. Residues 104-142 lie on the Mitochondrial intermembrane side of the membrane; the sequence is EKLQMEQQQQLQQRQILLGPNTGLSGGMPGALPPLPGKI. Positions 123–142 are C-tail signal; necessary for mitochondrion outer membrane localization and integration in the TOM complex; the sequence is PNTGLSGGMPGALPPLPGKI.

The protein belongs to the Tom22 family. As to quaternary structure, forms part of the preprotein translocase complex of the outer mitochondrial membrane (TOM complex) which consists of at least 7 different proteins (TOMM5, TOMM6, TOMM7, TOMM20, TOMM22, TOMM40 and TOMM70). Interacts with TOMM40. Interacts with PPP2R2B.

Its subcellular location is the mitochondrion outer membrane. In terms of biological role, central receptor component of the translocase of the outer membrane of mitochondria (TOM complex) responsible for the recognition and translocation of cytosolically synthesized mitochondrial preproteins. Together with the peripheral receptor TOM20 functions as the transit peptide receptor and facilitates the movement of preproteins into the translocation pore. Required for the translocation across the mitochondrial outer membrane of cytochrome P450 monooxygenases. The sequence is that of Mitochondrial import receptor subunit TOM22 homolog (Tomm22) from Rattus norvegicus (Rat).